Consider the following 270-residue polypeptide: Homeobox protein vent1B (270 aa).

Basic and acidic residues-rich tracts occupy residues 17-26 (EEAADGKDSM) and 44-59 (YAKEMPRRKDGQDVQE). Disordered stretches follow at residues 17–66 (EEAA…SFQC) and 88–134 (TWGS…LRTA). A compositionally biased stretch (polar residues) spans 89-99 (WGSSDEFSSAG). Over residues 116-131 (QDTDHNGKSTKSDRRL) the composition is skewed to basic and acidic residues. Residues 128-187 (DRRLRTAFSPQQISKLEQAFNKQRYLGASERKKLATSLMLSEIQVKTWFQNRRMKLKRQI) constitute a DNA-binding region (homeobox).

As to expression, expressed in the ventral marginal zone of gastrulae. At the end of gastrulation, predominantly localized to the ventral region of the closing slit blastopore. At early tail bud stage, expression is maintained only in the forming proctodeum.

Its subcellular location is the nucleus. Functionally, probable transcription regulator. Acts in a ventral signaling pathway downstream of bmp4 and vent2B. The sequence is that of Homeobox protein vent1B (vent1B) from Xenopus laevis (African clawed frog).